We begin with the raw amino-acid sequence, 142 residues long: Large ribosomal subunit protein uL13 (142 aa).

Belongs to the universal ribosomal protein uL13 family. Part of the 50S ribosomal subunit.

Functionally, this protein is one of the early assembly proteins of the 50S ribosomal subunit, although it is not seen to bind rRNA by itself. It is important during the early stages of 50S assembly. This is Large ribosomal subunit protein uL13 from Shigella sonnei (strain Ss046).